The sequence spans 702 residues: Autophagy-related protein 9 (702 aa).

The Cytoplasmic portion of the chain corresponds to 1 to 205 (MFYQPAQNKK…GKGLSCIIVH (205 aa)). The tract at residues 35–128 (QESLDSDEDE…SKQKPALPNF (94 aa)) is disordered. Residues 38–47 (LDSDEDESSP) are compositionally biased toward acidic residues. Low complexity predominate over residues 94-107 (SSKVPSKHPSPSFP). A compositionally biased stretch (polar residues) spans 108–120 (ETTSLRNLQNGSK). Residues 206–223 (RLFQILTVSFVIGFTTFI) traverse the membrane as a helical segment. The Lumenal segment spans residues 224–251 (TSCIDWPAVTPHGSLAGVTKSQCIAQMS). The helical transmembrane segment at 252–270 (PITYLVLWLFLSFLLALWI) threads the bilayer. The Cytoplasmic segment spans residues 271–421 (YYLTDIPRLW…RRRFIVAGFL (151 aa)). An intramembrane segment occupies 422 to 446 (NCLFAPIVAIYLVIHNFFRYFNEYH). Residues 447 to 496 (KNPGALSTRRYTPLALWTFREYNELQHFFDERINDSYAAASHYVSQFPDF) lie on the Cytoplasmic side of the membrane. Residues 497-522 (NMIRLFKYISFILGSFTAILVIITVF) traverse the membrane as a helical segment. Over 523–537 (DPELMVTFEITKDRS) the chain is Lumenal. Residues 538–555 (VLFYLGLFGSLIAVSRSI) form a helical membrane-spanning segment. The Cytoplasmic segment spans residues 556-603 (IPDETLVFAPEKALRRVITFTHYMPGWWSDNMHSKAVQQEFCSLYSYR). The stretch at 604–624 (IVNLLWEILGILLTPVLLFFT) is an intramembrane region. The Cytoplasmic segment spans residues 625–702 (FPSCSQDIVD…NTEAPRRDLR (78 aa)).

This sequence belongs to the ATG9 family. In terms of assembly, homotrimer; forms a homotrimer with a central pore that forms a path between the two membrane leaflets. Interacts with ctl1. Post-translationally, phosphorylated by atg1. Atg1 phosphorylation is required for preautophagosome elongation.

Its subcellular location is the preautophagosomal structure membrane. The protein localises to the cytoplasmic vesicle membrane. It localises to the golgi apparatus membrane. It is found in the endoplasmic reticulum membrane. The catalysed reaction is a 1,2-diacyl-sn-glycero-3-phosphocholine(in) = a 1,2-diacyl-sn-glycero-3-phosphocholine(out). It carries out the reaction a 1,2-diacyl-sn-glycero-3-phospho-L-serine(in) = a 1,2-diacyl-sn-glycero-3-phospho-L-serine(out). The enzyme catalyses a 1,2-diacyl-sn-glycero-3-phosphoethanolamine(in) = a 1,2-diacyl-sn-glycero-3-phosphoethanolamine(out). It catalyses the reaction a 1,2-diacyl-sn-glycero-3-phospho-(1D-myo-inositol-3-phosphate)(in) = a 1,2-diacyl-sn-glycero-3-phospho-(1D-myo-inositol-3-phosphate)(out). Functionally, phospholipid scramblase involved in autophagy and cytoplasm to vacuole transport (Cvt) vesicle formation. Cycles between the preautophagosomal structure/phagophore assembly site (PAS) and the cytoplasmic vesicle pool and supplies membrane for the growing autophagosome. Lipid scramblase activity plays a key role in preautophagosomal structure/phagophore assembly by distributing the phospholipids that arrive through atg2 from the cytoplasmic to the luminal leaflet of the bilayer, thereby driving autophagosomal membrane expansion. Also involved in endoplasmic reticulum-specific autophagic process and is essential for the survival of cells subjected to severe ER stress. Different machineries are required for anterograde trafficking to the PAS during either the Cvt pathway or bulk autophagy and for retrograde trafficking. Has a role in meiosis and sporulation. The polypeptide is Autophagy-related protein 9 (Schizosaccharomyces pombe (strain 972 / ATCC 24843) (Fission yeast)).